A 579-amino-acid chain; its full sequence is Probable N-acetylgalactosaminyltransferase 9 (579 aa).

At 1–12 (MLRYIIPRKKGT) the chain is on the cytoplasmic side. A helical; Signal-anchor for type II membrane protein membrane pass occupies residues 13-30 (FVIAAFLTVAFFCIVAYH). Over 31-579 (RNDRRRTKFQ…KWNFIDPAKA (549 aa)) the chain is Lumenal. Asparagine 67 is a glycosylation site (N-linked (GlcNAc...) asparagine). 5 disulfide bridges follow: cysteine 123-cysteine 356, cysteine 347-cysteine 427, cysteine 464-cysteine 483, cysteine 507-cysteine 520, and cysteine 545-cysteine 562. Residues 133–243 (LPKTSVIIIF…HGWLEPIVQR (111 aa)) form a catalytic subdomain A region. The substrate site is built by aspartate 174 and arginine 204. Aspartate 227 lines the Mn(2+) pocket. Position 228 (serine 228) interacts with substrate. Histidine 229 is a binding site for Mn(2+). The interval 302–364 (YIRSPTMAGG…PCSHVGHIFR (63 aa)) is catalytic subdomain B. Tryptophan 333 provides a ligand contact to substrate. Histidine 361 contributes to the Mn(2+) binding site. The substrate site is built by arginine 364, histidine 367, and tyrosine 369. The N-linked (GlcNAc...) asparagine glycan is linked to asparagine 370. The Ricin B-type lectin domain maps to 450–574 (AYGALHTVVS…KDEHQKWNFI (125 aa)).

Belongs to the glycosyltransferase 2 family. GalNAc-T subfamily. Mn(2+) serves as cofactor.

It is found in the golgi apparatus membrane. The protein operates within protein modification; protein glycosylation. Probable glycopeptide transferase involved in O-linked oligosaccharide biosynthesis. Glycopeptide transferases catalyze the transfer of an N-acetyl-D-galactosamine residue to an already glycosylated peptide. In contrast to other members of the family, it does not act as a peptide transferase that transfers GalNAc onto serine or threonine residue on peptides that have been tested. Some peptide transferase activity is however not excluded, considering that its appropriate peptide substrate may remain unidentified. The protein is Probable N-acetylgalactosaminyltransferase 9 (gly-9) of Caenorhabditis elegans.